Reading from the N-terminus, the 273-residue chain is Inclusion membrane protein A (273 aa).

The segment at 1-20 (MTTPTLIVTPPSPPAPSYSA) is disordered. Transmembrane regions (helical) follow at residues 41–61 (LILIGTIGFLALLGHLVGFLI) and 64–84 (QITIVLLALFITSLAGNALYL). A coiled-coil region spans residues 206–233 (QESLTAAIEELKTIRDSLRDEIGQLSQL). The tract at residues 253–273 (SQIRETLSSPRKSASPSTKSS) is disordered.

It belongs to the IncA family. As to quaternary structure, may form homodimers via its C-terminus. Forms homodimers, and probably higher-order oligomers.

The protein localises to the secreted. Its subcellular location is the host vacuole. It localises to the host pathogen-containing vacuole. The protein resides in the host pathogen-containing vacuole membrane. Functionally, chlamydia replicate within a host intracellular vacuole, termed an inclusion, which is formed by fusion of many smaller inclusion bodies. IncA may be involved in the homotypic fusion of inclusions; injection of anti-IncA antibodies prevents homotypic fusion, but not fusion with exocytic vesicles. This Chlamydia trachomatis serovar L2 (strain ATCC VR-902B / DSM 19102 / 434/Bu) protein is Inclusion membrane protein A (incA).